We begin with the raw amino-acid sequence, 311 residues long: MATSAMHHPPIVVLAGATASGKSALAMAIAKKIGAEIISADSRQIYWELTIGAAKPSPKELQEVPHHFINEKHIGEPFTAGDFAVEAWQRITAIHQRDKRVVVAGGSTLYVEGLLKGFANLPSANEAIRQRLETELQTLGSEALYQRLVKLDPTQAATLDATKTQRLIRSLEIIESSGTSVTALKAAQQPPPSHFTFLPFALFLPRETLYQRINQRVDDMMANGLLHEAEALYQTYCDTWQERNLSALRTVGYQELFAYFEGRHSLDEAINLIKQHTRNYAKRQITFFSNHLALRWIEQAEMEEIVEQHGF.

16 to 23 (GATASGKS) is an ATP binding site. 18–23 (TASGKS) contacts substrate. 2 interaction with substrate tRNA regions span residues 41-44 (DSRQ) and 165-169 (QRLIR).

Belongs to the IPP transferase family. As to quaternary structure, monomer. The cofactor is Mg(2+).

It carries out the reaction adenosine(37) in tRNA + dimethylallyl diphosphate = N(6)-dimethylallyladenosine(37) in tRNA + diphosphate. Catalyzes the transfer of a dimethylallyl group onto the adenine at position 37 in tRNAs that read codons beginning with uridine, leading to the formation of N6-(dimethylallyl)adenosine (i(6)A). The polypeptide is tRNA dimethylallyltransferase (Chlorobium chlorochromatii (strain CaD3)).